Consider the following 112-residue polypeptide: Putative iron-sulfur cluster insertion protein ErpA (112 aa).

Cysteine 40, cysteine 104, and cysteine 106 together coordinate iron-sulfur cluster.

It belongs to the HesB/IscA family. As to quaternary structure, homodimer. Iron-sulfur cluster is required as a cofactor.

Functionally, required for insertion of 4Fe-4S clusters. This Neisseria gonorrhoeae (strain ATCC 700825 / FA 1090) protein is Putative iron-sulfur cluster insertion protein ErpA.